A 414-amino-acid polypeptide reads, in one-letter code: MSHQLFRNTRIYSPMDSGQPSAGKAQGKLAHFPNGALLVADGLIVAMGDEEAVLAVAKGGAEVEEVDCGGRCMIPGFVDPHTHMCFAAPREAEFAQRIAGTSYLQILSEGGGILSSVRAVALAGEDELYKSTLHRVQTALSFGTTSLEIKSGYGLDTDNELKMLRVIGRVAVDSCLDIVATFLGAHAIPGQYKTDADAFITMIVEEMLPRVREQGIARFCDVFCERGVFSIEQSRILLKAARAMGLGLKIHADEVTDLGGAGLAAELGACSADHLLAASDTNIRAMSQAGVIATLLPATAYSLRKDYARARVMIENRVAVALATDCNPGSSFTESMQFVIGLAVLNMEMTPAEALTGASLNSAYALNMADRVGSLDRGKQADFLLLEGETPAVLAYHAGVSSVASVYKRGEKVH.

Residues 1–20 (MSHQLFRNTRIYSPMDSGQP) are compositionally biased toward polar residues. The segment at 1-26 (MSHQLFRNTRIYSPMDSGQPSAGKAQ) is disordered. 2 residues coordinate Fe(3+): histidine 81 and histidine 83. Residues histidine 81 and histidine 83 each coordinate Zn(2+). 4-imidazolone-5-propanoate contacts are provided by arginine 90, tyrosine 153, and histidine 186. Tyrosine 153 contributes to the N-formimidoyl-L-glutamate binding site. Fe(3+) is bound at residue histidine 251. Histidine 251 provides a ligand contact to Zn(2+). Glutamate 254 provides a ligand contact to 4-imidazolone-5-propanoate. Aspartate 325 is a Fe(3+) binding site. Position 325 (aspartate 325) interacts with Zn(2+). Residues asparagine 327 and glycine 329 each contribute to the N-formimidoyl-L-glutamate site. Residue serine 330 coordinates 4-imidazolone-5-propanoate.

The protein belongs to the metallo-dependent hydrolases superfamily. HutI family. The cofactor is Zn(2+). Fe(3+) is required as a cofactor.

The protein localises to the cytoplasm. The enzyme catalyses 4-imidazolone-5-propanoate + H2O = N-formimidoyl-L-glutamate. The protein operates within amino-acid degradation; L-histidine degradation into L-glutamate; N-formimidoyl-L-glutamate from L-histidine: step 3/3. In terms of biological role, catalyzes the hydrolytic cleavage of the carbon-nitrogen bond in imidazolone-5-propanoate to yield N-formimidoyl-L-glutamate. It is the third step in the universal histidine degradation pathway. The protein is Imidazolonepropionase of Desulfotalea psychrophila (strain LSv54 / DSM 12343).